The primary structure comprises 95 residues: Aspartyl/glutamyl-tRNA(Asn/Gln) amidotransferase subunit C (95 aa).

It belongs to the GatC family. Heterotrimer of A, B and C subunits.

It carries out the reaction L-glutamyl-tRNA(Gln) + L-glutamine + ATP + H2O = L-glutaminyl-tRNA(Gln) + L-glutamate + ADP + phosphate + H(+). The enzyme catalyses L-aspartyl-tRNA(Asn) + L-glutamine + ATP + H2O = L-asparaginyl-tRNA(Asn) + L-glutamate + ADP + phosphate + 2 H(+). Allows the formation of correctly charged Asn-tRNA(Asn) or Gln-tRNA(Gln) through the transamidation of misacylated Asp-tRNA(Asn) or Glu-tRNA(Gln) in organisms which lack either or both of asparaginyl-tRNA or glutaminyl-tRNA synthetases. The reaction takes place in the presence of glutamine and ATP through an activated phospho-Asp-tRNA(Asn) or phospho-Glu-tRNA(Gln). The polypeptide is Aspartyl/glutamyl-tRNA(Asn/Gln) amidotransferase subunit C (Chlorobium phaeobacteroides (strain BS1)).